Consider the following 79-residue polypeptide: Cytochrome b (79 aa).

3 consecutive transmembrane segments (helical) span residues 1 to 7 (SALFLAM), 31 to 52 (WLIR…YLHI), and 67 to 79 (WNIG…LTMA). His-37 and His-51 together coordinate heme b.

Belongs to the cytochrome b family. The cytochrome bc1 complex contains 11 subunits: 3 respiratory subunits (MT-CYB, CYC1 and UQCRFS1), 2 core proteins (UQCRC1 and UQCRC2) and 6 low-molecular weight proteins (UQCRH/QCR6, UQCRB/QCR7, UQCRQ/QCR8, UQCR10/QCR9, UQCR11/QCR10 and a cleavage product of UQCRFS1). This cytochrome bc1 complex then forms a dimer. Heme b serves as cofactor.

It is found in the mitochondrion inner membrane. Its function is as follows. Component of the ubiquinol-cytochrome c reductase complex (complex III or cytochrome b-c1 complex) that is part of the mitochondrial respiratory chain. The b-c1 complex mediates electron transfer from ubiquinol to cytochrome c. Contributes to the generation of a proton gradient across the mitochondrial membrane that is then used for ATP synthesis. The protein is Cytochrome b (MT-CYB) of Dipodomys heermanni (Heermann's kangaroo rat).